The following is a 361-amino-acid chain: Phospho-N-acetylmuramoyl-pentapeptide-transferase (361 aa).

Helical transmembrane passes span 10 to 30, 40 to 60, 84 to 104, 107 to 127, 147 to 167, 175 to 195, 206 to 226, 232 to 252, 260 to 280, 288 to 308, and 341 to 361; these read PGTGLQWSLGLIALILAACLI, LSLPLLLAGALSWLVCWIGVP, GTPTMGGLLLVPCGVVVGSLV, GDPRLLPIGLVTLAFMVIGGI, LLLQALAAGLFLLWAGLHGAI, WGWLLPIGLLIWPLGLFVFLA, LDGLAAGVGAIVLVGLSLQLM, GDPALAGYGAALAGAWLGFLL, VFMGDTGSLAMGAALSAIALL, LLMGGLLLAESLSVILQVWVF, and VVVSFWGISLLLVALGLVLVP.

It belongs to the glycosyltransferase 4 family. MraY subfamily. Mg(2+) is required as a cofactor.

It is found in the cell inner membrane. It catalyses the reaction UDP-N-acetyl-alpha-D-muramoyl-L-alanyl-gamma-D-glutamyl-meso-2,6-diaminopimeloyl-D-alanyl-D-alanine + di-trans,octa-cis-undecaprenyl phosphate = di-trans,octa-cis-undecaprenyl diphospho-N-acetyl-alpha-D-muramoyl-L-alanyl-D-glutamyl-meso-2,6-diaminopimeloyl-D-alanyl-D-alanine + UMP. Its pathway is cell wall biogenesis; peptidoglycan biosynthesis. Functionally, catalyzes the initial step of the lipid cycle reactions in the biosynthesis of the cell wall peptidoglycan: transfers peptidoglycan precursor phospho-MurNAc-pentapeptide from UDP-MurNAc-pentapeptide onto the lipid carrier undecaprenyl phosphate, yielding undecaprenyl-pyrophosphoryl-MurNAc-pentapeptide, known as lipid I. The polypeptide is Phospho-N-acetylmuramoyl-pentapeptide-transferase (Synechococcus sp. (strain RCC307)).